Consider the following 97-residue polypeptide: Co-chaperonin GroES (97 aa).

Belongs to the GroES chaperonin family. As to quaternary structure, heptamer of 7 subunits arranged in a ring. Interacts with the chaperonin GroEL.

The protein localises to the cytoplasm. Together with the chaperonin GroEL, plays an essential role in assisting protein folding. The GroEL-GroES system forms a nano-cage that allows encapsulation of the non-native substrate proteins and provides a physical environment optimized to promote and accelerate protein folding. GroES binds to the apical surface of the GroEL ring, thereby capping the opening of the GroEL channel. This chain is Co-chaperonin GroES, found in Ectopseudomonas mendocina (strain ymp) (Pseudomonas mendocina).